The primary structure comprises 371 residues: Aromatic peroxygenase (371 aa).

Residues 1-18 (MKYFPLFPTLVFAARVVA) form the signal peptide. A propeptide spanning residues 19–43 (FPAYASLAGLSQQELDAIIPTLEAR) is cleaved from the precursor. Asn-54 carries an N-linked (GlcNAc...) asparagine glycan. A heme-binding site is contributed by Cys-79. Asn-184, Asn-204, Asn-225, and Asn-329 each carry an N-linked (GlcNAc...) asparagine glycan. A disulfide bridge connects residues Cys-321 and Cys-362.

This sequence belongs to the chloroperoxidase family. It depends on heme b as a cofactor. In terms of processing, N-glycosylated.

The enzyme catalyses RH + H2O2 = ROH + H2O.. Its function is as follows. Aromatic peroxidase that oxidizes aryl alcohols into the corresponding aldehydes and then into the corresponding benzoic acids. Oxidizes toluene and naphthalene. Catalyzes the regioselective peroxide-dependent hydroxylation of propranolol and diclofenac to 5-hydroxypropranolol and 4'-hydroxydiclofenac. Catalyzes the regioselective peroxide-dependent hydroxylation of naphthalene to 1-naphthol or 2-naphthol via a naphthalene 1,2-oxide intermediate. Catalyzes the regioselective peroxide-dependent oxidation of pyridine to pyridine N-oxide. Halogenates monochlorodimedone and phenol. Oxidizes the sulfur-containing heterocycle dibenzothiophene to yield ring-hydroxylation products and to a lesser extent sulfoxidation products. In Cyclocybe aegerita (Black poplar mushroom), this protein is Aromatic peroxygenase.